The primary structure comprises 192 residues: Protein GrpE (192 aa).

The tract at residues Met1–Gly34 is disordered. Residues Ala21–Thr31 show a composition bias toward polar residues.

It belongs to the GrpE family. As to quaternary structure, homodimer.

The protein resides in the cytoplasm. Participates actively in the response to hyperosmotic and heat shock by preventing the aggregation of stress-denatured proteins, in association with DnaK and GrpE. It is the nucleotide exchange factor for DnaK and may function as a thermosensor. Unfolded proteins bind initially to DnaJ; upon interaction with the DnaJ-bound protein, DnaK hydrolyzes its bound ATP, resulting in the formation of a stable complex. GrpE releases ADP from DnaK; ATP binding to DnaK triggers the release of the substrate protein, thus completing the reaction cycle. Several rounds of ATP-dependent interactions between DnaJ, DnaK and GrpE are required for fully efficient folding. This Yersinia enterocolitica serotype O:8 / biotype 1B (strain NCTC 13174 / 8081) protein is Protein GrpE.